Here is a 98-residue protein sequence, read N- to C-terminus: MNNINDLRLNNNISNTNKSQNSTGIGDEFAKMLKNEINDLNKAQESGEAAMTDIATGQVKDLHQAAIAITKAESSMKFMLEVRNKAISAYKEITRTQI.

Over residues 1–23 (MNNINDLRLNNNISNTNKSQNST) the composition is skewed to low complexity. Residues 1–24 (MNNINDLRLNNNISNTNKSQNSTG) are disordered.

This sequence belongs to the FliE family.

The protein localises to the bacterial flagellum basal body. This Campylobacter jejuni subsp. jejuni serotype O:2 (strain ATCC 700819 / NCTC 11168) protein is Flagellar hook-basal body complex protein FliE.